Consider the following 196-residue polypeptide: Agamous-like MADS-box protein AGL27 (196 aa).

The region spanning 1-61 (MGRRKIEIKR…GKLYDSSSGD (61 aa)) is the MADS-box domain. One can recognise a K-box domain in the interval 80 to 170 (ALDLEEKIQN…ASQMGKNTLL (91 aa)). Residues 175–196 (ERGMFPGSSSGNKIPETLPLLN) are disordered.

In terms of assembly, interacts with AGL39, AGL97 and AGL74. Expressed in most plant tissues, embryo, seedlings, roots, leaves, stems, inflorescence, pollen, siliques and flowers.

The protein localises to the nucleus. Probable transcription factor involved in the negative regulation of flowering time in both long and short days, probably through the photoperiodic and vernalization pathways. Prevents premature flowering. The sequence is that of Agamous-like MADS-box protein AGL27 (AGL27) from Arabidopsis thaliana (Mouse-ear cress).